A 2170-amino-acid chain; its full sequence is ATP-binding cassette sub-family A member 7 (2170 aa).

A helical membrane pass occupies residues 22–42 (PIQLVVELLWPLFLFFILVAV). At 43-547 (RHSHPPLEHH…DVFLRVLSRS (505 aa)) the chain is on the extracellular side. Cys-75 and Cys-222 form a disulfide bridge. Asn-309 carries an N-linked (GlcNAc...) asparagine glycan. A run of 6 helical transmembrane segments spans residues 548-568 (LPLF…KAVV), 591-611 (LGWF…LVLV), 624-644 (VVVF…SFLL), 653-673 (LAAA…VLCV), 679-699 (LPLG…GFGC), and 733-753 (AFLL…EAVC). The 232-residue stretch at 805 to 1036 (VSIRGLKKHF…LGCGYYLTLV (232 aa)) folds into the ABC transporter 1 domain. ATP is bound at residue 839 to 846 (GHNGAGKT). Residues 847-867 (TTLSILSGLFPPSSGSASILG) form a helical membrane-spanning segment. The tract at residues 1044-1086 (THDLKGDTEDPRREKKSGSEGKTADTVLTRDGPHRSSQVPAPD) is disordered. Positions 1045-1066 (HDLKGDTEDPRREKKSGSEGKT) are enriched in basic and acidic residues. A helical membrane pass occupies residues 1257–1277 (IVLPALFVGLALFFTLIVPPF). Over 1278 to 1562 (GQYPPLQLSP…TLIASSVDVL (285 aa)) the chain is Extracellular. An intrachain disulfide couples Cys-1370 to Cys-1384. Helical transmembrane passes span 1563–1583 (VSIC…LVLI), 1609–1629 (FLWD…IFLA), 1646–1666 (LLLL…SFFF), 1674–1694 (VVLT…TFVL), 1708–1728 (ILKQ…LIDM), and 1754–1774 (IIGK…LITL). Residues 1818-2050 (LVLRDLTKVY…FGAGHTLTLR (233 aa)) form the ABC transporter 2 domain. 1852–1859 (GVNGAGKT) serves as a coordination point for ATP. Positions 2129-2170 (QGEEEEGSGQETETREVSTPGLQHPKRVSRFLEDPSSVETVI) are disordered.

The protein belongs to the ABC transporter superfamily. ABCA family. Post-translationally, N-glycosylated. Expressed in blood cells. Also detected in brain and ovary tissues (at protein level). Expressed in platelet.

The protein localises to the cell membrane. It localises to the golgi apparatus membrane. It is found in the early endosome membrane. Its subcellular location is the cell projection. The protein resides in the ruffle membrane. The protein localises to the phagocytic cup. It localises to the cytoplasm. In terms of biological role, ATP-binding cassette (ABC) transporter that plays a role in lipid homeostasis and macrophage-mediated phagocytosis. Binds APOA1 and may function in apolipoprotein-mediated phospholipid efflux from cells. May also mediate cholesterol efflux. May regulate cellular ceramide homeostasis during keratinocyte differentiation. Involved in lipid raft organization and CD1D localization on thymocytes and antigen-presenting cells, which plays an important role in natural killer T-cell development and activation. Plays a role in phagocytosis of apoptotic cells by macrophages. Macrophage phagocytosis is stimulated by APOA1 or APOA2, probably by stabilization of ABCA7. Also involved in phagocytic clearance of amyloid-beta by microglia cells and macrophages. Further limits amyloid-beta production by playing a role in the regulation of amyloid-beta A4 precursor protein (APP) endocytosis and/or processing. In Rattus norvegicus (Rat), this protein is ATP-binding cassette sub-family A member 7 (Abca7).